Consider the following 305-residue polypeptide: UDP-3-O-acyl-N-acetylglucosamine deacetylase (305 aa).

Zn(2+)-binding residues include His-79, His-238, and Asp-242. The Proton donor role is filled by His-265.

It belongs to the LpxC family. The cofactor is Zn(2+).

It catalyses the reaction a UDP-3-O-[(3R)-3-hydroxyacyl]-N-acetyl-alpha-D-glucosamine + H2O = a UDP-3-O-[(3R)-3-hydroxyacyl]-alpha-D-glucosamine + acetate. It functions in the pathway glycolipid biosynthesis; lipid IV(A) biosynthesis; lipid IV(A) from (3R)-3-hydroxytetradecanoyl-[acyl-carrier-protein] and UDP-N-acetyl-alpha-D-glucosamine: step 2/6. Its function is as follows. Catalyzes the hydrolysis of UDP-3-O-myristoyl-N-acetylglucosamine to form UDP-3-O-myristoylglucosamine and acetate, the committed step in lipid A biosynthesis. The polypeptide is UDP-3-O-acyl-N-acetylglucosamine deacetylase (Edwardsiella ictaluri (strain 93-146)).